The sequence spans 119 residues: ATP-dependent Clp protease adapter protein ClpS (119 aa).

The interval 1–24 (MGPESPDSIPPHGPGNGDGDQDLD) is disordered.

It belongs to the ClpS family. As to quaternary structure, binds to the N-terminal domain of the chaperone ClpA.

Functionally, involved in the modulation of the specificity of the ClpAP-mediated ATP-dependent protein degradation. This is ATP-dependent Clp protease adapter protein ClpS from Gluconobacter oxydans (strain 621H) (Gluconobacter suboxydans).